Consider the following 245-residue polypeptide: 4-hydroxy-tetrahydrodipicolinate reductase (245 aa).

NAD(+) contacts are provided by residues 7 to 12, 75 to 77, and 102 to 105; these read GAKGKV, GTT, and APNF. Residue His132 is the Proton donor/acceptor of the active site. Position 133 (His133) interacts with (S)-2,3,4,5-tetrahydrodipicolinate. The Proton donor role is filled by Lys136. Position 142-143 (142-143) interacts with (S)-2,3,4,5-tetrahydrodipicolinate; sequence GT.

It belongs to the DapB family.

It is found in the cytoplasm. It catalyses the reaction (S)-2,3,4,5-tetrahydrodipicolinate + NAD(+) + H2O = (2S,4S)-4-hydroxy-2,3,4,5-tetrahydrodipicolinate + NADH + H(+). The catalysed reaction is (S)-2,3,4,5-tetrahydrodipicolinate + NADP(+) + H2O = (2S,4S)-4-hydroxy-2,3,4,5-tetrahydrodipicolinate + NADPH + H(+). It functions in the pathway amino-acid biosynthesis; L-lysine biosynthesis via DAP pathway; (S)-tetrahydrodipicolinate from L-aspartate: step 4/4. Catalyzes the conversion of 4-hydroxy-tetrahydrodipicolinate (HTPA) to tetrahydrodipicolinate. The chain is 4-hydroxy-tetrahydrodipicolinate reductase from Mycobacterium bovis (strain BCG / Pasteur 1173P2).